A 1551-amino-acid polypeptide reads, in one-letter code: Dual oxidase 1 (1551 aa).

Residues M1–A21 form the signal peptide. Residues Q22 to G596 lie on the Extracellular side of the membrane. Residues S26–F593 are peroxidase-like; mediates peroxidase activity. N94 is a glycosylation site (N-linked (GlcNAc...) asparagine). A disordered region spans residues L197 to A222. N-linked (GlcNAc...) asparagine glycans are attached at residues N342, N354, N461, and N534. The chain crosses the membrane as a helical span at residues V597–A617. Topologically, residues R618 to H1044 are cytoplasmic. 3 EF-hand domains span residues P815 to G850, S851 to I886, and Q895 to E930. The Ca(2+) site is built by D828, D830, N832, Y834, E839, D864, D866, N868, and E875. Positions Y956–R1248 are interaction with TXNDC11. The helical transmembrane segment at I1045–Y1065 threads the bilayer. Topologically, residues Y1066 to R1080 are extracellular. Residues V1081 to L1101 traverse the membrane as a helical segment. In terms of domain architecture, Ferric oxidoreductase spans R1087–S1269. At L1102–N1151 the chain is on the cytoplasmic side. The chain crosses the membrane as a helical span at residues V1152–H1172. Residues N1173–Q1188 are Extracellular-facing. The chain crosses the membrane as a helical span at residues T1189–A1209. Residues S1210 to H1226 lie on the Cytoplasmic side of the membrane. A helical membrane pass occupies residues L1227–P1247. A topological domain (extracellular) is located at residue R1248. Residues F1249–S1269 form a helical membrane-spanning segment. The 107-residue stretch at R1270 to E1376 folds into the FAD-binding FR-type domain. At R1270–F1551 the chain is on the cytoplasmic side.

In the N-terminal section; belongs to the peroxidase family. As to quaternary structure, interacts with TPO and CYBA. Interacts with TXNDC11. Post-translationally, N-glycosylated. In terms of tissue distribution, expressed in thyrocytes (at protein level). Specifically expressed in thyroid.

Its subcellular location is the apical cell membrane. It carries out the reaction NADH + O2 + H(+) = H2O2 + NAD(+). The catalysed reaction is NADPH + O2 + H(+) = H2O2 + NADP(+). It functions in the pathway hormone biosynthesis; thyroid hormone biosynthesis. With respect to regulation, peroxidase activity is inhibited by aminobenzohydrazide. The NADPH oxidase activity is calcium-dependent. Its function is as follows. Generates hydrogen peroxide which is required for the activity of thyroid peroxidase/TPO and lactoperoxidase/LPO. Plays a role in thyroid hormones synthesis and lactoperoxidase-mediated antimicrobial defense at the surface of mucosa. May have its own peroxidase activity through its N-terminal peroxidase-like domain. This is Dual oxidase 1 (DUOX1) from Canis lupus familiaris (Dog).